Consider the following 185-residue polypeptide: Adenylate kinase (185 aa).

8–16 provides a ligand contact to ATP; that stretch reads GIPGSGSTT.

It belongs to the archaeal adenylate kinase family.

Its subcellular location is the cytoplasm. The catalysed reaction is AMP + ATP = 2 ADP. The protein is Adenylate kinase (adkA) of Methanothermobacter thermautotrophicus (strain ATCC 29096 / DSM 1053 / JCM 10044 / NBRC 100330 / Delta H) (Methanobacterium thermoautotrophicum).